Here is a 345-residue protein sequence, read N- to C-terminus: MLLIDIKDKELSQEEVEILEHPLVSGLILFSRNFHDKVQLEALVKSIRQRVKKPLLITVDQEGGRVQRFREGFTKLPAMQAFHTLAKNPQESTALARQTGWLMAAEMFALDIDLSFAPVLDLGHQCKAIGDRSFGENPDAMLPIAEAFIDGMREMGMATTGKHFPGHGHVLADSHLETPFDDRPKEAIFNRDILPFKQLISKGKLSAIMPAHVIYTQCDSQPASGSEYWLKQVLRNQLNFNGVIFSDDLGMKGAGFMGNFVERSEKAIHAGCDLLLLCNEPEGVIQVLDGLKYQPTKTQTERHISLMKRKTVRWNELEASPRYQQAQQRLTALQNDWLEYKAQHC.

Substrate-binding positions include Asp-60, Arg-68, Arg-132, and 162–163 (KH). Catalysis depends on His-175, which acts as the Proton donor/acceptor. The active-site Nucleophile is Asp-247.

The protein belongs to the glycosyl hydrolase 3 family. NagZ subfamily.

Its subcellular location is the cytoplasm. It catalyses the reaction Hydrolysis of terminal non-reducing N-acetyl-D-hexosamine residues in N-acetyl-beta-D-hexosaminides.. The protein operates within cell wall biogenesis; peptidoglycan recycling. Functionally, plays a role in peptidoglycan recycling by cleaving the terminal beta-1,4-linked N-acetylglucosamine (GlcNAc) from peptide-linked peptidoglycan fragments, giving rise to free GlcNAc, anhydro-N-acetylmuramic acid and anhydro-N-acetylmuramic acid-linked peptides. The sequence is that of Beta-hexosaminidase from Actinobacillus pleuropneumoniae serotype 5b (strain L20).